Consider the following 130-residue polypeptide: S-adenosylmethionine decarboxylase proenzyme (130 aa).

Ser66 (schiff-base intermediate with substrate; via pyruvic acid) is an active-site residue. Ser66 bears the Pyruvic acid (Ser); by autocatalysis mark. His71 acts as the Proton acceptor; for processing activity in catalysis. Cys86 acts as the Proton donor; for catalytic activity in catalysis.

This sequence belongs to the prokaryotic AdoMetDC family. Type 1 subfamily. Heterotetramer of two alpha and two beta chains arranged as a dimer of alpha/beta heterodimers. Requires pyruvate as cofactor. Is synthesized initially as an inactive proenzyme. Formation of the active enzyme involves a self-maturation process in which the active site pyruvoyl group is generated from an internal serine residue via an autocatalytic post-translational modification. Two non-identical subunits are generated from the proenzyme in this reaction, and the pyruvate is formed at the N-terminus of the alpha chain, which is derived from the carboxyl end of the proenzyme. The post-translation cleavage follows an unusual pathway, termed non-hydrolytic serinolysis, in which the side chain hydroxyl group of the serine supplies its oxygen atom to form the C-terminus of the beta chain, while the remainder of the serine residue undergoes an oxidative deamination to produce ammonia and the pyruvoyl group blocking the N-terminus of the alpha chain.

It catalyses the reaction S-adenosyl-L-methionine + H(+) = S-adenosyl 3-(methylsulfanyl)propylamine + CO2. Its pathway is amine and polyamine biosynthesis; S-adenosylmethioninamine biosynthesis; S-adenosylmethioninamine from S-adenosyl-L-methionine: step 1/1. In terms of biological role, catalyzes the decarboxylation of S-adenosylmethionine to S-adenosylmethioninamine (dcAdoMet), the propylamine donor required for the synthesis of the polyamines spermine and spermidine from the diamine putrescine. This Bacillus cytotoxicus (strain DSM 22905 / CIP 110041 / 391-98 / NVH 391-98) protein is S-adenosylmethionine decarboxylase proenzyme.